A 568-amino-acid chain; its full sequence is Putative F-box protein At5g39480 (568 aa).

One can recognise an F-box domain in the interval A9–Q55. The tract at residues T315 to S337 is disordered. The span at S321–S332 shows a compositional bias: low complexity.

This chain is Putative F-box protein At5g39480, found in Arabidopsis thaliana (Mouse-ear cress).